The primary structure comprises 363 residues: Spermidine/putrescine import ATP-binding protein PotA (363 aa).

An ABC transporter domain is found at 4-234 (LELRNVIRRF…PANRFIADFI (231 aa)). 36–43 (GPSGCGKT) is an ATP binding site.

It belongs to the ABC transporter superfamily. Spermidine/putrescine importer (TC 3.A.1.11.1) family. As to quaternary structure, the complex is composed of two ATP-binding proteins (PotA), two transmembrane proteins (PotB and PotC) and a solute-binding protein (PotD).

Its subcellular location is the cell inner membrane. The catalysed reaction is ATP + H2O + polyamine-[polyamine-binding protein]Side 1 = ADP + phosphate + polyamineSide 2 + [polyamine-binding protein]Side 1.. In terms of biological role, part of the ABC transporter complex PotABCD involved in spermidine/putrescine import. Responsible for energy coupling to the transport system. This chain is Spermidine/putrescine import ATP-binding protein PotA, found in Nitrosomonas eutropha (strain DSM 101675 / C91 / Nm57).